We begin with the raw amino-acid sequence, 473 residues long: Biotin-dependent acetyl-/propionyl-coenzyme A carboxylase beta6 subunit (473 aa).

The region spanning 1-224 is the CoA carboxyltransferase N-terminal domain; the sequence is MTIMAPEAVG…QGHFDRSKAE (224 aa). In terms of domain architecture, CoA carboxyltransferase C-terminal spans 225 to 473; sequence AGDTDIHALL…RRGRHKNIPL (249 aa).

The protein belongs to the AccD/PCCB family. The biotin-dependent acyl-CoA carboxylase complex is composed of AccA3, which contains the biotin carboxylase (BC) and biotin carboxyl carrier protein (BCCP) domains, and AccD6, which contains the carboxyl transferase (CT) domain.

The catalysed reaction is N(6)-carboxybiotinyl-L-lysyl-[protein] + acetyl-CoA = N(6)-biotinyl-L-lysyl-[protein] + malonyl-CoA. It catalyses the reaction N(6)-carboxybiotinyl-L-lysyl-[protein] + propanoyl-CoA = methylmalonyl-CoA + N(6)-biotinyl-L-lysyl-[protein]. The protein operates within lipid metabolism; fatty acid biosynthesis. It participates in lipid metabolism; mycolic acid biosynthesis. In terms of biological role, component of a biotin-dependent acyl-CoA carboxylase complex. This subunit transfers the CO2 from carboxybiotin to the CoA ester substrate. When associated with the alpha3 subunit AccA3, is involved in the carboxylation of acetyl-CoA and propionyl-CoA. The chain is Biotin-dependent acetyl-/propionyl-coenzyme A carboxylase beta6 subunit (accD6) from Mycobacterium bovis (strain ATCC BAA-935 / AF2122/97).